The primary structure comprises 229 residues: Large ribosomal subunit protein uL1 (229 aa).

It belongs to the universal ribosomal protein uL1 family. Part of the 50S ribosomal subunit.

Its function is as follows. Binds directly to 23S rRNA. The L1 stalk is quite mobile in the ribosome, and is involved in E site tRNA release. In terms of biological role, protein L1 is also a translational repressor protein, it controls the translation of the L11 operon by binding to its mRNA. The chain is Large ribosomal subunit protein uL1 from Streptococcus gordonii (strain Challis / ATCC 35105 / BCRC 15272 / CH1 / DL1 / V288).